The sequence spans 4083 residues: Dynein axonemal heavy chain 3 (4083 aa).

Disordered stretches follow at residues 1–37 and 111–132; these read MSDTNCSAQKLDKSDSVHHMSHSQARPELPPLPVSAN and DKTSQGLPLGTSSKTSTEPSKK. A stem region spans residues 1–1357; the sequence is MSDTNCSAQK…HVQMITTEAL (1357 aa). Coiled-coil stretches lie at residues 1026–1052 and 1108–1133; these read IKPIEAECRKWEEKLVRVQENLDAWLK and RMTEKLQEANVLLEDIQRGLNDYLEK. AAA stretches follow at residues 1358–1579, 1639–1870, 2003–2251, and 2362–2613; these read YGYE…VLTA, EALN…LHCK, TIPA…VIQG, and EFNS…LLRH. ATP-binding positions include 1396–1403, 1677–1684, 2041–2048, and 2401–2408; these read GPAGTGKT, GDPMGGKT, GPTGTGKS, and GIGGSGRQ. The segment at 2628–2927 is stalk; that stretch reads FKTLLNSKRQ…NSLEKNIEIC (300 aa). Residues 2651-2714 adopt a coiled-coil conformation; it reads QKLEFASSQV…DEKEANAAAA (64 aa). 2 AAA regions span residues 3012-3242 and 3455-3679; these read LGDP…EISE and IQNF…QIQM.

It belongs to the dynein heavy chain family. As to quaternary structure, consists of at least two heavy chains and a number of intermediate and light chains.

It is found in the cytoplasm. It localises to the cytoskeleton. Its subcellular location is the cilium axoneme. Its function is as follows. Force generating protein of respiratory cilia. Produces force towards the minus ends of microtubules. Dynein has ATPase activity; the force-producing power stroke is thought to occur on release of ADP. Involved in sperm motility; implicated in sperm flagellar assembly. The protein is Dynein axonemal heavy chain 3 (Dnah3) of Mus musculus (Mouse).